The following is a 185-amino-acid chain: ATP-dependent protease subunit HslV (185 aa).

T13 is a catalytic residue. The Na(+) site is built by G167, C170, and T173.

This sequence belongs to the peptidase T1B family. HslV subfamily. A double ring-shaped homohexamer of HslV is capped on each side by a ring-shaped HslU homohexamer. The assembly of the HslU/HslV complex is dependent on binding of ATP.

It is found in the cytoplasm. It catalyses the reaction ATP-dependent cleavage of peptide bonds with broad specificity.. With respect to regulation, allosterically activated by HslU binding. Functionally, protease subunit of a proteasome-like degradation complex believed to be a general protein degrading machinery. The protein is ATP-dependent protease subunit HslV of Sinorhizobium fredii (strain NBRC 101917 / NGR234).